The chain runs to 242 residues: Biosynthetic peptidoglycan transglycosylase (242 aa).

The chain crosses the membrane as a helical span at residues 19–39 (ILAALAVFWGGGIALFSVVPV).

It belongs to the glycosyltransferase 51 family.

The protein resides in the cell inner membrane. It catalyses the reaction [GlcNAc-(1-&gt;4)-Mur2Ac(oyl-L-Ala-gamma-D-Glu-L-Lys-D-Ala-D-Ala)](n)-di-trans,octa-cis-undecaprenyl diphosphate + beta-D-GlcNAc-(1-&gt;4)-Mur2Ac(oyl-L-Ala-gamma-D-Glu-L-Lys-D-Ala-D-Ala)-di-trans,octa-cis-undecaprenyl diphosphate = [GlcNAc-(1-&gt;4)-Mur2Ac(oyl-L-Ala-gamma-D-Glu-L-Lys-D-Ala-D-Ala)](n+1)-di-trans,octa-cis-undecaprenyl diphosphate + di-trans,octa-cis-undecaprenyl diphosphate + H(+). The protein operates within cell wall biogenesis; peptidoglycan biosynthesis. Functionally, peptidoglycan polymerase that catalyzes glycan chain elongation from lipid-linked precursors. The polypeptide is Biosynthetic peptidoglycan transglycosylase (Salmonella schwarzengrund (strain CVM19633)).